A 367-amino-acid chain; its full sequence is Protein TlpB (367 aa).

Transmembrane regions (helical) follow at residues 15 to 35, 53 to 73, 83 to 103, 124 to 144, and 153 to 173; these read ILISFLFIISAIAKMYPSPYF, IIAPWFSRILIGIELALGILI, IIPITILLLAVFVGHLSYVTF, IQAIIKNIIAIFLLVYLFFLL, and FYVVIGITLATIISLFLLAPI.

It localises to the membrane. The polypeptide is Protein TlpB (tlpB) (Flavobacterium psychrophilum).